A 607-amino-acid chain; its full sequence is NAD-dependent malic enzyme 2, mitochondrial (607 aa).

The N-terminal 32 residues, 1–32 (MMWKNIAGLSKAAAAARTHGSRRCFSTAIPGP), are a transit peptide targeting the mitochondrion. The Proton donor role is filled by Tyr-136. Arg-189 is a binding site for NAD(+). Lys-207 serves as the catalytic Proton acceptor. 3 residues coordinate a divalent metal cation: Glu-278, Asp-279, and Asp-302. Asp-302 and Asn-449 together coordinate NAD(+).

It belongs to the malic enzymes family. As to quaternary structure, homodimer. Heterodimer of two related subunits in NAD-MEH complex. Interacts with NAD-ME1. Mg(2+) is required as a cofactor. It depends on Mn(2+) as a cofactor. In terms of tissue distribution, expressed in leaves, stems, flowers, and roots (at protein level). Present in pollen.

Its subcellular location is the mitochondrion. The catalysed reaction is (S)-malate + NAD(+) = pyruvate + CO2 + NADH. Its activity is regulated as follows. Activated by 2-ketoglutarate, phosphoenolpyruvate (PEP), fructose 1,6-biphosphate (FBP) and coenzyme A (acetyl-CoA and CoA) as homodimer and by oxaloacetate (OAA), 2-ketoglutarate, succinate, fumarate and CoA as heterodimer NAD-MEH. Repressed by succinate and fumarate as homodimer, in the presence of NAD(+) and competitively toward the substrate L-malate. Functionally, involved in the regulation of sugars and amino acids metabolisms during the night period. This chain is NAD-dependent malic enzyme 2, mitochondrial (NAD-ME2), found in Arabidopsis thaliana (Mouse-ear cress).